We begin with the raw amino-acid sequence, 561 residues long: Arginine--tRNA ligase (561 aa).

The short motif at 128–138 (ANPTGPLHVGH) is the 'HIGH' region element.

It belongs to the class-I aminoacyl-tRNA synthetase family. In terms of assembly, monomer.

It localises to the cytoplasm. It catalyses the reaction tRNA(Arg) + L-arginine + ATP = L-arginyl-tRNA(Arg) + AMP + diphosphate. The chain is Arginine--tRNA ligase from Leptothrix cholodnii (strain ATCC 51168 / LMG 8142 / SP-6) (Leptothrix discophora (strain SP-6)).